Reading from the N-terminus, the 207-residue chain is Guanylate kinase (207 aa).

The 181-residue stretch at 4-184 folds into the Guanylate kinase-like domain; sequence GTLYIVSAPS…ALSDLKTIIR (181 aa). 11-18 provides a ligand contact to ATP; the sequence is APSGAGKS.

Belongs to the guanylate kinase family.

Its subcellular location is the cytoplasm. It catalyses the reaction GMP + ATP = GDP + ADP. Essential for recycling GMP and indirectly, cGMP. In Salmonella typhimurium (strain LT2 / SGSC1412 / ATCC 700720), this protein is Guanylate kinase (gmk).